The sequence spans 451 residues: MAQRYDEMVHYPGLDGMSLAGFADAHTGRALQHHSLSQSTPYGSTGAAHRVPMPPGMGSNDGLKREKDEIYGHPLFPLLALVFEKCELATCSPRDNSGSFPGGDVCSSDSFNEDIAVFAKQVRTEKPLFSSNPELDNLMIQAIQVLRFHLLELEKVHDLCDNFCHRYITCLKGKMPIDLVIDDRDGSSKSDLEDFTGSCTSLSDQNNTWIRDHDETGSTHSGTPGPSSGGLASQSGDNSSEQGDCMDNSVASPSTGDDDDLDRDKKRNKKRGIFPKVATNIMRAWLFQHLSHPYPSEEQKKQLAQDTGLTILQVNNWFINARRRIVQPMIDQSNRTGQGGAPYSPDGQNMGGYVMDGQQHMGIRPPGFQGIPGDYTAAPSTMPMGFPPAGYTPAIPPHSAGLRHGPSLHSYLPGHPHSMILPAGASPHHLVSAQSPADALLNGQNIDIHAH.

The segment at 33-64 (HHSLSQSTPYGSTGAAHRVPMPPGMGSNDGLK) is disordered. Residues 34-43 (HSLSQSTPYG) are compositionally biased toward polar residues. Residues 102–185 (GGDVCSSDSF…PIDLVIDDRD (84 aa)) form the MEIS N-terminal domain. The disordered stretch occupies residues 206-272 (NNTWIRDHDE…RDKKRNKKRG (67 aa)). Residues 218–230 (STHSGTPGPSSGG) are compositionally biased toward low complexity. The span at 231–242 (LASQSGDNSSEQ) shows a compositional bias: polar residues. The homeobox DNA-binding region spans 267–329 (RNKKRGIFPK…NARRRIVQPM (63 aa)).

It belongs to the TALE/MEIS homeobox family.

The protein resides in the nucleus. In terms of biological role, a caudalizing protein which is required to pattern the anterior/posterior (A/P) axis during central nervous system (CNS) formation. Inhibits anterior neural expression and acts as a transcriptional activator to induce posterior neural gene expression. Maintains a proper A/P balance required for hindbrain formation by activating the FGF/MAPK pathway, which modulates the planar cell polarity (PCP) pathway. Interacts with retinoid signaling during hindbrain patterning. The sequence is that of Homeobox protein meis3-B (meis3-b) from Xenopus laevis (African clawed frog).